The following is a 194-amino-acid chain: Small ribosomal subunit protein uS7 (194 aa).

Belongs to the universal ribosomal protein uS7 family. In terms of assembly, part of the 30S ribosomal subunit.

One of the primary rRNA binding proteins, it binds directly to 16S rRNA where it nucleates assembly of the head domain of the 30S subunit. Is located at the subunit interface close to the decoding center. The polypeptide is Small ribosomal subunit protein uS7 (Sulfurisphaera tokodaii (strain DSM 16993 / JCM 10545 / NBRC 100140 / 7) (Sulfolobus tokodaii)).